We begin with the raw amino-acid sequence, 868 residues long: Paladin (868 aa).

Residue glycine 2 is the site of N-myristoyl glycine attachment.

The protein belongs to the paladin family.

It is found in the cytoplasm. The protein resides in the cytosol. The chain is Paladin (PALD1) from Gallus gallus (Chicken).